The sequence spans 128 residues: MVGKHCILELYDCDPARLDDEAFLRTTITTAAKRAGATLLNLITHSFEPQGVTGLALLAESHISIHTWPESGYAAVDVFTCGDHTMPEQACAVLRDELRAQRHALRSFRRETPAAVADTVREPIQLPG.

Catalysis depends on serine 61, which acts as the Schiff-base intermediate with substrate; via pyruvic acid. Residue serine 61 is modified to Pyruvic acid (Ser); by autocatalysis. Residue histidine 66 is the Proton acceptor; for processing activity of the active site. Residue cysteine 81 is the Proton donor; for catalytic activity of the active site.

This sequence belongs to the prokaryotic AdoMetDC family. Type 1 subfamily. Heterotetramer of two alpha and two beta chains arranged as a dimer of alpha/beta heterodimers. The cofactor is pyruvate. Is synthesized initially as an inactive proenzyme. Formation of the active enzyme involves a self-maturation process in which the active site pyruvoyl group is generated from an internal serine residue via an autocatalytic post-translational modification. Two non-identical subunits are generated from the proenzyme in this reaction, and the pyruvate is formed at the N-terminus of the alpha chain, which is derived from the carboxyl end of the proenzyme. The post-translation cleavage follows an unusual pathway, termed non-hydrolytic serinolysis, in which the side chain hydroxyl group of the serine supplies its oxygen atom to form the C-terminus of the beta chain, while the remainder of the serine residue undergoes an oxidative deamination to produce ammonia and the pyruvoyl group blocking the N-terminus of the alpha chain.

It catalyses the reaction S-adenosyl-L-methionine + H(+) = S-adenosyl 3-(methylsulfanyl)propylamine + CO2. It participates in amine and polyamine biosynthesis; S-adenosylmethioninamine biosynthesis; S-adenosylmethioninamine from S-adenosyl-L-methionine: step 1/1. Catalyzes the decarboxylation of S-adenosylmethionine to S-adenosylmethioninamine (dcAdoMet), the propylamine donor required for the synthesis of the polyamines spermine and spermidine from the diamine putrescine. The protein is S-adenosylmethionine decarboxylase proenzyme of Parasynechococcus marenigrum (strain WH8102).